Here is a 116-residue protein sequence, read N- to C-terminus: Secreted RxLR effector protein 9 (116 aa).

The N-terminal stretch at 1–17 (MRLIYIFMVSIVTTLHA) is a signal peptide. A RxLR-dEER motif is present at residues 49–64 (RILRGTDGNVNREQER).

Belongs to the RxLR effector family.

It localises to the secreted. It is found in the host cytoplasm. Its subcellular location is the host nucleus. Its function is as follows. Effector that acts as a broad suppressor of cell death to interrupt plant immunity. Inhibits cell death induced by cell death-inducing proteins, including the PAMP elicitor INF1 from P.infestans. The sequence is that of Secreted RxLR effector protein 9 from Plasmopara viticola (Downy mildew of grapevine).